A 589-amino-acid chain; its full sequence is Aspartate--tRNA(Asp/Asn) ligase (589 aa).

An L-aspartate-binding site is contributed by Glu170. The tract at residues 194–197 (QLFK) is aspartate. Arg216 is an L-aspartate binding site. Residues 216-218 (RDE) and Gln225 contribute to the ATP site. His448 contacts L-aspartate. Glu482 lines the ATP pocket. Arg489 contributes to the L-aspartate binding site. 534–537 (GWDR) contacts ATP. The interval 563 to 589 (PLTDAPASITAQQRKESGIDTKPKEVE) is disordered. Residues 575-589 (QRKESGIDTKPKEVE) show a composition bias toward basic and acidic residues.

It belongs to the class-II aminoacyl-tRNA synthetase family. Type 1 subfamily. Homodimer.

The protein resides in the cytoplasm. The enzyme catalyses tRNA(Asx) + L-aspartate + ATP = L-aspartyl-tRNA(Asx) + AMP + diphosphate. Its function is as follows. Aspartyl-tRNA synthetase with relaxed tRNA specificity since it is able to aspartylate not only its cognate tRNA(Asp) but also tRNA(Asn). Reaction proceeds in two steps: L-aspartate is first activated by ATP to form Asp-AMP and then transferred to the acceptor end of tRNA(Asp/Asn). The polypeptide is Aspartate--tRNA(Asp/Asn) ligase (Mycobacterium leprae (strain Br4923)).